The sequence spans 199 residues: LIM domain-containing protein WLIM2b (199 aa).

LIM zinc-binding domains are found at residues 8-68 (QKCK…LFKE) and 106-166 (EKCA…LFKE).

As to quaternary structure, interacts with F-actin. Expressed in roots, leaves, stems, flowers and siliques. Barely detected in pollen.

It is found in the cytoplasm. The protein localises to the cytoskeleton. In terms of biological role, binds to actin filaments and promotes cross-linking into thick bundles. Has an actin-stabilizing activity. The actin regulatory activities are not regulated by pH and [Ca(2+)]. In Arabidopsis thaliana (Mouse-ear cress), this protein is LIM domain-containing protein WLIM2b.